We begin with the raw amino-acid sequence, 620 residues long: Probable serine/threonine-protein kinase RTK1 (620 aa).

Disordered regions lie at residues 1–20, 29–130, 153–186, 210–237, and 252–271; these read MVKETPLHSSSSTSLSSLFR, AKIF…PVRT, KDAFHHPHPVRSTAHSNISTVSSAKSDTPSSNLS, QASTPGSVELQHNSSSGSDDTSSRKKKS, and HDNHHHHHHHNRGSTPTKPK. The span at 7 to 18 shows a compositional bias: low complexity; it reads LHSSSSTSLSSL. A compositionally biased stretch (basic and acidic residues) spans 56-76; that stretch reads KNTDSDQEDQIKYNKPNDRRS. The residue at position 58 (threonine 58) is a Phosphothreonine. Serine 60 bears the Phosphoserine mark. Composition is skewed to polar residues over residues 95–107, 165–186, and 210–222; these read VASSTLTGISPTS, TAHSNISTVSSAKSDTPSSNLS, and QASTPGSVELQHN. Serine 216 bears the Phosphoserine mark. The span at 254-263 shows a compositional bias: basic residues; it reads NHHHHHHHNR. The Protein kinase domain occupies 302–575; that stretch reads GIPGRKLGEG…MNDVVKDDWL (274 aa). ATP contacts are provided by residues 308–316 and lysine 330; that span reads LGEGASGSV. A Glycyl lysine isopeptide (Lys-Gly) (interchain with G-Cter in ubiquitin) cross-link involves residue lysine 334. Aspartate 430 serves as the catalytic Proton acceptor.

It belongs to the protein kinase superfamily. Ser/Thr protein kinase family. In terms of assembly, interacts with ribosome biogenesis factors ARC1, CKA2 and GUS1.

The catalysed reaction is L-seryl-[protein] + ATP = O-phospho-L-seryl-[protein] + ADP + H(+). It catalyses the reaction L-threonyl-[protein] + ATP = O-phospho-L-threonyl-[protein] + ADP + H(+). In terms of biological role, probable serine/threonine-protein kinase that may be involved in ribosome biogenesis. In Saccharomyces cerevisiae (strain ATCC 204508 / S288c) (Baker's yeast), this protein is Probable serine/threonine-protein kinase RTK1 (RTK1).